An 88-amino-acid chain; its full sequence is Conotoxin MaIr34 (88 aa).

The first 21 residues, 1–21, serve as a signal peptide directing secretion; sequence MKLTCVIVAVLFLTAWTFVMA. Positions 22 to 53 are excised as a propeptide; that stretch reads DDPRDGPDTAVRGGKRFWKARNEMNSAASKLN. Disulfide bonds link cysteine 57-cysteine 75, cysteine 64-cysteine 79, and cysteine 74-cysteine 83.

This sequence belongs to the conotoxin O1 superfamily. As to expression, expressed by the venom duct.

The protein localises to the secreted. In Conus marmoreus (Marble cone), this protein is Conotoxin MaIr34.